The primary structure comprises 581 residues: METESGNQKNVMEEESTEKKKEVEKKKRSRVKQVLADIAKQVDFWFGDANLHKDRFLREQIEKSRDGYVDISLLVSFNKMKKLTTDGKLIARALRSSAVVELDLEGTRIRRKKPLGERPKDEDERTVYVELLPKNVNHSWIERVFGKCGNVVYISIPHYKSTGDPKGFAFVEFETKEQAAKAIEFLNNPPEEAPRKPGIFPKTVKNKPIPALRVVEEKKKKKKKKGRMKKEDNVQAKEENMDTTNTSISKMKRSRPTSEGSDIESTEPQKQSSKKKKKRDRVEASSLPEVRTGKRKRSSSEDAESLGPRSKVKKIIQKDIIKEPSEASKENRDIEISTEEEKDTGDLKDSSLLKTKRKHKKKHKERHKMGEEVIPLRVLSKSEWMDLKKEYLALQKASMASLKKTISQIKSESEMETDGGVPQKTGMKNEKTNSEECPTQEKVNATGPQFVSGVIVKIISTEPLPGRKQVRDTLAAISEVLYVDLLEGDTECHARFKTPEDAQAVINAYTEISKKHCWKLEILSGDHEQRYWQKILVDRQAKLNQPREKKRGTEKLITKAEKIRLAKTQQASKHIRFSEYD.

M1 carries the N-acetylmethionine modification. Residues 1-10 (METESGNQKN) show a composition bias toward polar residues. Disordered regions lie at residues 1-28 (METE…KKKR), 188-368 (NPPE…ERHK), and 410-440 (KSES…CPTQ). The region spanning 28-122 (RSRVKQVLAD…KPLGERPKDE (95 aa)) is the HTH La-type RNA-binding domain. The RRM domain maps to 125-203 (RTVYVELLPK…PRKPGIFPKT (79 aa)). Residues 219-228 (KKKKKKKGRM) show a composition bias toward basic residues. Positions 229 to 240 (KKEDNVQAKEEN) are enriched in basic and acidic residues. K237 participates in a covalent cross-link: Glycyl lysine isopeptide (Lys-Gly) (interchain with G-Cter in SUMO2). T257 is modified (phosphothreonine). S258, S261, S273, S298, S299, and S300 each carry phosphoserine. A compositionally biased stretch (basic and acidic residues) spans 316 to 335 (IQKDIIKEPSEASKENRDIE). S337 carries the post-translational modification Phosphoserine. T338 carries the phosphothreonine modification. The residue at position 351 (S351) is a Phosphoserine. Positions 354 to 367 (KTKRKHKKKHKERH) are enriched in basic residues. A Glycyl lysine isopeptide (Lys-Gly) (interchain with G-Cter in SUMO2) cross-link involves residue K410. Residues 449–562 (QFVSGVIVKI…TEKLITKAEK (114 aa)) enclose the xRRM domain.

The protein belongs to the LARP7 family. In terms of assembly, core component of the 7SK RNP complex, at least composed of 7SK RNA, LARP7, MEPCE, HEXIM1 (or HEXIM2) and P-TEFb (composed of CDK9 and CCNT1/cyclin-T1). Interacts with METTL16. Interacts with RBM7; upon genotoxic stress this interaction is enhanced, triggering the release of inactive P-TEFb complex from the core, yielding to P-TEFb complex activation. Associates with box C/D small nucleolar ribonucleoprotein (snoRNP) complexes.

It localises to the nucleus. It is found in the nucleoplasm. In terms of biological role, RNA-binding protein that specifically binds distinct small nuclear RNA (snRNAs) and regulates their processing and function. Specifically binds the 7SK snRNA (7SK RNA) and acts as a core component of the 7SK ribonucleoprotein (RNP) complex, thereby acting as a negative regulator of transcription elongation by RNA polymerase II. The 7SK RNP complex sequesters the positive transcription elongation factor b (P-TEFb) in a large inactive 7SK RNP complex preventing RNA polymerase II phosphorylation and subsequent transcriptional elongation. The 7SK RNP complex also promotes snRNA gene transcription by RNA polymerase II via interaction with the little elongation complex (LEC). LARP7 specifically binds to the highly conserved 3'-terminal U-rich stretch of 7SK RNA; on stimulation, remains associated with 7SK RNA, whereas P-TEFb is released from the complex. LARP7 also acts as a regulator of mRNA splicing fidelity by promoting U6 snRNA processing. Specifically binds U6 snRNAs and associates with a subset of box C/D RNP complexes: promotes U6 snRNA 2'-O-methylation by facilitating U6 snRNA loading into box C/D RNP complexes. U6 snRNA 2'-O-methylation is required for mRNA splicing fidelity. Binds U6 snRNAs with a 5'-CAGGG-3' sequence motif. U6 snRNA processing is required for spermatogenesis. This is La-related protein 7 from Macaca fascicularis (Crab-eating macaque).